The chain runs to 199 residues: Imidazole glycerol phosphate synthase subunit HisH (199 aa).

The region spanning 3-199 (NITIIDTGCA…LKNFVEKVPF (197 aa)) is the Glutamine amidotransferase type-1 domain. Catalysis depends on cysteine 78, which acts as the Nucleophile. Active-site residues include histidine 178 and glutamate 180.

In terms of assembly, heterodimer of HisH and HisF.

It localises to the cytoplasm. It carries out the reaction 5-[(5-phospho-1-deoxy-D-ribulos-1-ylimino)methylamino]-1-(5-phospho-beta-D-ribosyl)imidazole-4-carboxamide + L-glutamine = D-erythro-1-(imidazol-4-yl)glycerol 3-phosphate + 5-amino-1-(5-phospho-beta-D-ribosyl)imidazole-4-carboxamide + L-glutamate + H(+). The enzyme catalyses L-glutamine + H2O = L-glutamate + NH4(+). It participates in amino-acid biosynthesis; L-histidine biosynthesis; L-histidine from 5-phospho-alpha-D-ribose 1-diphosphate: step 5/9. Functionally, IGPS catalyzes the conversion of PRFAR and glutamine to IGP, AICAR and glutamate. The HisH subunit catalyzes the hydrolysis of glutamine to glutamate and ammonia as part of the synthesis of IGP and AICAR. The resulting ammonia molecule is channeled to the active site of HisF. This chain is Imidazole glycerol phosphate synthase subunit HisH, found in Haemophilus influenzae (strain 86-028NP).